Consider the following 311-residue polypeptide: MALPIIIDCDPGHDDAIALVLALASPELEVKAITSSAGNQTPEKTLRNVLRMLTLLKRPDIPVAGGAVKPLMRELIIADNVHGESGLDGPALPEPSFAPQSGTAVELMAKTLRESSQPVTIVSTGPQTNVALLLNSHPELHAKIARIVIMGGAMGLGNWTPAAEFNIYVDPEAAEIVFQSGIPVVMAGLDVTHKAQIHAADIERFRAIGNPISTIVAELLDFFMEYHKDEKWGFVGAPLHDPCTIAWLLKPEIFTTVERWVGVETQGKYTQGMTVVDYYFLTGNKPNATVMVDVDRQGFVDLLAERLQYYA.

Residue histidine 240 is part of the active site.

This sequence belongs to the IUNH family. RihA subfamily.

In terms of biological role, hydrolyzes cytidine or uridine to ribose and cytosine or uracil, respectively. In Salmonella agona (strain SL483), this protein is Pyrimidine-specific ribonucleoside hydrolase RihA.